The chain runs to 160 residues: Protein-export protein SecB (160 aa).

This sequence belongs to the SecB family. In terms of assembly, homotetramer, a dimer of dimers. One homotetramer interacts with 1 SecA dimer.

It is found in the cytoplasm. One of the proteins required for the normal export of preproteins out of the cell cytoplasm. It is a molecular chaperone that binds to a subset of precursor proteins, maintaining them in a translocation-competent state. It also specifically binds to its receptor SecA. The chain is Protein-export protein SecB from Burkholderia lata (strain ATCC 17760 / DSM 23089 / LMG 22485 / NCIMB 9086 / R18194 / 383).